The sequence spans 241 residues: MASRLARTAVGAARLRPSVVPRVLPALSTVASPRYSSGVPSEDPKTKAQSIIDSLPGSNLMSKTAILSSAAGLSIYALSNEYYVVNEETVVAFCLLSVWGGLIKFGGPLYKKWADEQSDKIKNILNSARADHTQAVKTRIGDVKQMSGVIDITKTLFAVSKETAKLEAEAYELEQRTALAAEAKTVLDSWVRYESQVKQRQQKELAQTVIAKVQKELENPKVLKQILEQSVADVEKIVSKA.

The transit peptide at 1–35 (MASRLARTAVGAARLRPSVVPRVLPALSTVASPRY) directs the protein to the mitochondrion.

Belongs to the eukaryotic ATPase B chain family. As to quaternary structure, F-type ATPases have 2 components, CF(1) - the catalytic core - and CF(0) - the membrane proton channel. In yeast, the dimeric form of ATP synthase consists of 17 polypeptides: alpha, beta, gamma, delta, epsilon, 4 (B), 5 (OSCP), 6 (A), 8, 9 (C), d, E (Tim11), f, g, h, i/j and k.

The protein localises to the mitochondrion. The protein resides in the mitochondrion inner membrane. In terms of biological role, mitochondrial membrane ATP synthase (F(1)F(0) ATP synthase or Complex V) produces ATP from ADP in the presence of a proton gradient across the membrane which is generated by electron transport complexes of the respiratory chain. F-type ATPases consist of two structural domains, F(1) - containing the extramembraneous catalytic core, and F(0) - containing the membrane proton channel, linked together by a central stalk and a peripheral stalk. During catalysis, ATP synthesis in the catalytic domain of F(1) is coupled via a rotary mechanism of the central stalk subunits to proton translocation. Part of the complex F(0) domain and the peripheric stalk, which acts as a stator to hold the catalytic alpha(3)beta(3) subcomplex and subunit a/atp6 static relative to the rotary elements. In Neurospora crassa (strain ATCC 24698 / 74-OR23-1A / CBS 708.71 / DSM 1257 / FGSC 987), this protein is ATP synthase subunit 4, mitochondrial (atp-3).